The sequence spans 706 residues: Cyclic nucleotide-gated ion channel 18 (706 aa).

Topologically, residues 1-53 (MNKIRSLRCLLPETITSASTAASNRGSDGSQFSVLWRHQILDPDSNIVTYWNH) are cytoplasmic. The helical transmembrane segment at 54–74 (VFLITSILALFLDPFYFYVPY) threads the bilayer. Topologically, residues 75–86 (VGGPACLSIDIS) are extracellular. Residues 87-107 (LAATVTFFRTVADIFHLLHIF) form a helical membrane-spanning segment. The Cytoplasmic portion of the chain corresponds to 108–142 (MKFRTAFVARSSRVFGRGELVMDSREIAMRYLKTD). The chain crosses the membrane as a helical span at residues 143-163 (FLIDVAAMLPLPQLVIWLVIP). Over 164–174 (AATNGTANHAN) the chain is Extracellular. The chain crosses the membrane as a helical span at residues 175 to 195 (STLALIVLVQYIPRSFIIFPL). Topologically, residues 196-217 (NQRIIKTTGFIAKTAWAGAAYN) are cytoplasmic. Residues 218-238 (LLLYILASHVLGAMWYLSSIG) traverse the membrane as a helical segment. The Extracellular portion of the chain corresponds to 239–345 (RQFSCWSNVC…ITTSVYLGET (107 aa)). The helical transmembrane segment at 346-366 (LFCITICIFGLILFTLLIGNM) threads the bilayer. Residues 367–706 (QSSLQSMSVR…PDFSIDKEDV (340 aa)) lie on the Cytoplasmic side of the membrane. A nucleoside 3',5'-cyclic phosphate is bound by residues 449–579 (FFSQ…AFRY) and E520. The calmodulin-binding stretch occupies residues 565–580 (FKRLQSKKLQHAFRYY). One can recognise an IQ domain in the interval 585 to 614 (RAWGACFVQSAWRRYKRRKLAKELSLHESS). A disordered region spans residues 661 to 706 (ANTRRGTNQKASSSSTGKKDGSSTSLKMPQLFKPDEPDFSIDKEDV). Positions 693–706 (KPDEPDFSIDKEDV) are enriched in basic and acidic residues.

It belongs to the cyclic nucleotide-gated cation channel (TC 1.A.1.5) family. Homomultimer. Interacts with CPK32. In terms of tissue distribution, expressed in pollen grains. Not detected in leaves, roots or root hairs.

It localises to the cell membrane. Its subcellular location is the cytoplasmic vesicle membrane. Cyclic nucleotide-gated ion channel required for directional pollen tube growth into the transmitting tract. Acts as a Ca(2+)-permeable divalent cation-selective channel inhibited by either lanthanum or gadolinium. Regulated by CPK32 to mediate Ca(2+) transport across the plasma membrane in response to Ca(2+) oscillation. This Arabidopsis thaliana (Mouse-ear cress) protein is Cyclic nucleotide-gated ion channel 18.